The sequence spans 474 residues: tRNA-2-methylthio-N(6)-dimethylallyladenosine synthase (474 aa).

An MTTase N-terminal domain is found at 3 to 120 (KKLHIKTWGC…LPEMINSVRG (118 aa)). [4Fe-4S] cluster contacts are provided by Cys12, Cys49, Cys83, Cys157, Cys161, and Cys164. A Radical SAM core domain is found at 143–375 (RAEGPTAFVS…QERINQQAMA (233 aa)). In terms of domain architecture, TRAM spans 378 to 441 (RRMLGTTQRI…PNSLRGKVVR (64 aa)).

It belongs to the methylthiotransferase family. MiaB subfamily. In terms of assembly, monomer. [4Fe-4S] cluster serves as cofactor.

The protein resides in the cytoplasm. The catalysed reaction is N(6)-dimethylallyladenosine(37) in tRNA + (sulfur carrier)-SH + AH2 + 2 S-adenosyl-L-methionine = 2-methylsulfanyl-N(6)-dimethylallyladenosine(37) in tRNA + (sulfur carrier)-H + 5'-deoxyadenosine + L-methionine + A + S-adenosyl-L-homocysteine + 2 H(+). Catalyzes the methylthiolation of N6-(dimethylallyl)adenosine (i(6)A), leading to the formation of 2-methylthio-N6-(dimethylallyl)adenosine (ms(2)i(6)A) at position 37 in tRNAs that read codons beginning with uridine. In Escherichia coli (strain UTI89 / UPEC), this protein is tRNA-2-methylthio-N(6)-dimethylallyladenosine synthase.